Consider the following 371-residue polypeptide: Peptide chain release factor 2 (371 aa).

Position 253 is an N5-methylglutamine (Gln253).

It belongs to the prokaryotic/mitochondrial release factor family. Post-translationally, methylated by PrmC. Methylation increases the termination efficiency of RF2.

It is found in the cytoplasm. Functionally, peptide chain release factor 2 directs the termination of translation in response to the peptide chain termination codons UGA and UAA. This Mycobacterium ulcerans (strain Agy99) protein is Peptide chain release factor 2.